Reading from the N-terminus, the 435-residue chain is Homogentisate 1,2-dioxygenase (435 aa).

The active-site Proton acceptor is His289. The Fe cation site is built by His332 and Glu338. Positions 347 and 368 each coordinate homogentisate. His368 serves as a coordination point for Fe cation.

The protein belongs to the homogentisate dioxygenase family. Hexamer; dimer of trimers. Fe cation serves as cofactor.

It carries out the reaction homogentisate + O2 = 4-maleylacetoacetate + H(+). Its pathway is amino-acid degradation; L-phenylalanine degradation; acetoacetate and fumarate from L-phenylalanine: step 4/6. Functionally, involved in the catabolism of homogentisate (2,5-dihydroxyphenylacetate or 2,5-OH-PhAc), a central intermediate in the degradation of phenylalanine and tyrosine. Catalyzes the oxidative ring cleavage of the aromatic ring of homogentisate to yield maleylacetoacetate. The polypeptide is Homogentisate 1,2-dioxygenase (Pseudomonas savastanoi pv. phaseolicola (strain 1448A / Race 6) (Pseudomonas syringae pv. phaseolicola (strain 1448A / Race 6))).